The following is a 574-amino-acid chain: Cytochrome P450 4g15 (574 aa).

The tract at residues 288-327 (REREQNGGVDQTPSTAGSDEKDREKDKEKASPVAGLSYGQ) is disordered. Polar residues predominate over residues 295-304 (GVDQTPSTAG). A compositionally biased stretch (basic and acidic residues) spans 305-317 (SDEKDREKDKEKA). Positions 379 and 519 each coordinate heme.

The protein belongs to the cytochrome P450 family. Heme serves as cofactor. As to expression, expressed in larval brain cortex cells and ring glands and weakly in larval digestive system and adult nervous system.

The protein resides in the endoplasmic reticulum membrane. Its subcellular location is the microsome membrane. In terms of biological role, probably involved in steroid hormones biosynthesis. The protein is Cytochrome P450 4g15 (Cyp4g15) of Drosophila melanogaster (Fruit fly).